The following is a 293-amino-acid chain: Protein phosphatase 1 regulatory subunit 3B (293 aa).

The 109-residue stretch at R129–I237 folds into the CBM21 domain.

In terms of assembly, interacts with glycogen, PPP1CC catalytic subunit of PP1 and PYGL. Associates with glycogen particles. Forms complexes with debranching enzyme, glycogen phosphorylase, glycogen synthase and phosphorylase kinase which is necessary for its regulation of PP1 activity.

In terms of biological role, acts as a glycogen-targeting subunit for phosphatase PP1. Facilitates interaction of the PP1 with enzymes of the glycogen metabolism and regulates its activity. Suppresses the rate at which PP1 dephosphorylates (inactivates) glycogen phosphorylase and enhances the rate at which it activates glycogen synthase and therefore limits glycogen breakdown. This chain is Protein phosphatase 1 regulatory subunit 3B (ppp1r3b), found in Danio rerio (Zebrafish).